The primary structure comprises 426 residues: Histidine--tRNA ligase (426 aa).

It belongs to the class-II aminoacyl-tRNA synthetase family.

It localises to the cytoplasm. The enzyme catalyses tRNA(His) + L-histidine + ATP = L-histidyl-tRNA(His) + AMP + diphosphate + H(+). The sequence is that of Histidine--tRNA ligase from Saccharolobus solfataricus (strain ATCC 35092 / DSM 1617 / JCM 11322 / P2) (Sulfolobus solfataricus).